We begin with the raw amino-acid sequence, 154 residues long: Probable ubiquitin-conjugating enzyme E2 31 (154 aa).

One can recognise a UBC core domain in the interval 8-153 (KAAQRIAMEY…AREFTARHAN (146 aa)). Cysteine 91 acts as the Glycyl thioester intermediate in catalysis.

The protein belongs to the ubiquitin-conjugating enzyme family.

It carries out the reaction S-ubiquitinyl-[E1 ubiquitin-activating enzyme]-L-cysteine + [E2 ubiquitin-conjugating enzyme]-L-cysteine = [E1 ubiquitin-activating enzyme]-L-cysteine + S-ubiquitinyl-[E2 ubiquitin-conjugating enzyme]-L-cysteine.. The protein operates within protein modification; protein ubiquitination. Its function is as follows. Accepts the ubiquitin from the E1 complex and catalyzes its covalent attachment to other proteins. This Arabidopsis thaliana (Mouse-ear cress) protein is Probable ubiquitin-conjugating enzyme E2 31 (UBC31).